A 328-amino-acid chain; its full sequence is UDP-glucose 4-epimerase (328 aa).

Residues 20–21 (FV), 41–46 (VRHAVN), 57–58 (DI), 77–81 (CAARA), S123, Y149, and K153 each bind NAD(+). Residues S123 and Y149 each coordinate substrate. Residue Y149 is the Proton acceptor of the active site. Substrate contacts are provided by residues 198–199 (GI) and 215–217 (SIN).

Belongs to the NAD(P)-dependent epimerase/dehydratase family. Homodimer. NAD(+) is required as a cofactor.

It carries out the reaction UDP-alpha-D-glucose = UDP-alpha-D-galactose. It functions in the pathway bacterial outer membrane biogenesis; LPS O-antigen biosynthesis. Functionally, involved in the metabolism of galactose. Catalyzes the conversion of UDP-galactose (UDP-Gal) to UDP-glucose (UDP-Glc) through a mechanism involving the transient reduction of NAD. The chain is UDP-glucose 4-epimerase (galE) from Vibrio cholerae.